A 213-amino-acid chain; its full sequence is Uracil phosphoribosyltransferase (213 aa).

Residues arginine 78, arginine 103, and 131–139 (DPMLATGGT) contribute to the 5-phospho-alpha-D-ribose 1-diphosphate site. Uracil contacts are provided by residues isoleucine 197 and 202-204 (GDA). Aspartate 203 serves as a coordination point for 5-phospho-alpha-D-ribose 1-diphosphate.

The protein belongs to the UPRTase family. The cofactor is Mg(2+).

The catalysed reaction is UMP + diphosphate = 5-phospho-alpha-D-ribose 1-diphosphate + uracil. The protein operates within pyrimidine metabolism; UMP biosynthesis via salvage pathway; UMP from uracil: step 1/1. Allosterically activated by GTP. Functionally, catalyzes the conversion of uracil and 5-phospho-alpha-D-ribose 1-diphosphate (PRPP) to UMP and diphosphate. This Bifidobacterium longum (strain DJO10A) protein is Uracil phosphoribosyltransferase.